A 377-amino-acid chain; its full sequence is Phosphatidylserine decarboxylase proenzyme, mitochondrial (377 aa).

Residues 1-34 (MMPLFNVLRSARMLPAVSKKVVSPPMMLRSVREL) constitute a mitochondrion transit peptide. At 35–61 (TNQSKNVYATKEVIIGASQKKKRSWVK) the chain is on the mitochondrial matrix side. Residues 62–80 (WLSVSTLIIGGASYVGYLF) form a helical membrane-spanning segment. At 81 to 377 (TPDWREIVDS…YGQSLVADGV (297 aa)) the chain is on the mitochondrial intermembrane side. Catalysis depends on charge relay system; for autoendoproteolytic cleavage activity residues Asp181, His238, and Ser344. Catalysis depends on Ser344, which acts as the Schiff-base intermediate with substrate; via pyruvic acid; for decarboxylase activity. At Ser344 the chain carries Pyruvic acid (Ser); by autocatalysis.

This sequence belongs to the phosphatidylserine decarboxylase family. PSD-B subfamily. Eukaryotic type I sub-subfamily. Heterodimer of a large membrane-associated beta subunit and a small pyruvoyl-containing alpha subunit. Pyruvate is required as a cofactor. Is synthesized initially as an inactive proenzyme. Formation of the active enzyme involves a self-maturation process in which the active site pyruvoyl group is generated from an internal serine residue via an autocatalytic post-translational modification. Two non-identical subunits are generated from the proenzyme in this reaction, and the pyruvate is formed at the N-terminus of the alpha chain, which is derived from the carboxyl end of the proenzyme. The autoendoproteolytic cleavage occurs by a canonical serine protease mechanism, in which the side chain hydroxyl group of the serine supplies its oxygen atom to form the C-terminus of the beta chain, while the remainder of the serine residue undergoes an oxidative deamination to produce ammonia and the pyruvoyl prosthetic group on the alpha chain. During this reaction, the Ser that is part of the protease active site of the proenzyme becomes the pyruvoyl prosthetic group, which constitutes an essential element of the active site of the mature decarboxylase.

It localises to the mitochondrion inner membrane. It catalyses the reaction a 1,2-diacyl-sn-glycero-3-phospho-L-serine + H(+) = a 1,2-diacyl-sn-glycero-3-phosphoethanolamine + CO2. The protein operates within phospholipid metabolism; phosphatidylethanolamine biosynthesis; phosphatidylethanolamine from CDP-diacylglycerol: step 2/2. Catalyzes the formation of phosphatidylethanolamine (PtdEtn) from phosphatidylserine (PtdSer). Plays a central role in phospholipid metabolism and in the interorganelle trafficking of phosphatidylserine. In Caenorhabditis elegans, this protein is Phosphatidylserine decarboxylase proenzyme, mitochondrial.